The sequence spans 266 residues: Probable matrix protein (266 aa).

The disordered stretch occupies residues 158–177 (ACSAGTGGTEEGDSDTEEEP). Acidic residues predominate over residues 167–177 (EEGDSDTEEEP).

It localises to the virion. Its function is as follows. May play a role in virion budding and release by binding the ribonucleocapsid and the host membrane. The chain is Probable matrix protein from Ixodidae (hardbacked ticks).